We begin with the raw amino-acid sequence, 279 residues long: Very long chain fatty acid elongase 1 (279 aa).

Met-1 is modified (N-acetylmethionine). Helical transmembrane passes span 23 to 43 (PLMG…YFVL), 61 to 81 (FMIV…YEFL), 110 to 130 (VAWL…IFIL), 137 to 154 (VTFL…SWWW), 176 to 196 (VIMY…PYLW), 201 to 221 (MTAI…QYYF), and 231 to 251 (VIIH…SNFW). A Di-lysine motif motif is present at residues 275-279 (KVKAN).

This sequence belongs to the ELO family. ELOVL1 subfamily. As to quaternary structure, interacts with LASS2 and HSD17B12. Interacts with TECR. As to expression, ubiquitous.

It localises to the endoplasmic reticulum membrane. The catalysed reaction is a very-long-chain acyl-CoA + malonyl-CoA + H(+) = a very-long-chain 3-oxoacyl-CoA + CO2 + CoA. The enzyme catalyses eicosanoyl-CoA + malonyl-CoA + H(+) = 3-oxodocosanoyl-CoA + CO2 + CoA. It carries out the reaction (11Z)-eicosenoyl-CoA + malonyl-CoA + H(+) = 3-oxo-(13Z)-docosenoyl-CoA + CO2 + CoA. It catalyses the reaction docosanoyl-CoA + malonyl-CoA + H(+) = 3-oxotetracosanoyl-CoA + CO2 + CoA. The catalysed reaction is (13Z)-docosenoyl-CoA + malonyl-CoA + H(+) = 3-oxo-(15Z)-tetracosenoyl-CoA + CO2 + CoA. The enzyme catalyses tetracosanoyl-CoA + malonyl-CoA + H(+) = 3-oxohexacosanoyl-CoA + CO2 + CoA. It carries out the reaction hexacosanoyl-CoA + malonyl-CoA + H(+) = 3-oxooctacosanyol-CoA + CO2 + CoA. It catalyses the reaction octadecanoyl-CoA + malonyl-CoA + H(+) = 3-oxoeicosanoyl-CoA + CO2 + CoA. It participates in lipid metabolism; fatty acid biosynthesis. Functionally, catalyzes the first and rate-limiting reaction of the four reactions that constitute the long-chain fatty acids elongation cycle. This endoplasmic reticulum-bound enzymatic process allows the addition of 2 carbons to the chain of long- and very long-chain fatty acids (VLCFAs) per cycle. Condensing enzyme that exhibits activity toward saturated and monounsaturated acyl-CoA substrates, with the highest activity towards C22:0 acyl-CoA. May participate in the production of both saturated and monounsaturated VLCFAs of different chain lengths that are involved in multiple biological processes as precursors of membrane lipids and lipid mediators. Important for saturated C24:0 and monounsaturated C24:1 sphingolipid synthesis. Indirectly inhibits RPE65 via production of VLCFAs. This chain is Very long chain fatty acid elongase 1, found in Homo sapiens (Human).